Reading from the N-terminus, the 462-residue chain is UPF0236 protein TTE2489 (462 aa).

Belongs to the UPF0236 family.

The chain is UPF0236 protein TTE2489 from Caldanaerobacter subterraneus subsp. tengcongensis (strain DSM 15242 / JCM 11007 / NBRC 100824 / MB4) (Thermoanaerobacter tengcongensis).